The sequence spans 530 residues: Sensor protein kinase PilS (530 aa).

Helical transmembrane passes span L25–S37, W57–L70, L76–G98, P101–L119, G124–L144, and A156–V174. The Cytoplasmic segment spans residues R175 to S530. Residues E196–R260 form the PAS domain. In terms of domain architecture, Histidine kinase spans G316–R527. At H319 the chain carries Phosphohistidine; by autocatalysis.

As to quaternary structure, interacts with PilA.

It is found in the cell inner membrane. It carries out the reaction ATP + protein L-histidine = ADP + protein N-phospho-L-histidine.. In terms of biological role, member of the two-component regulatory system PilS/PilR that regulates the expression of multiple genes including the type IV pilus (T4P) major subunit PilA. Thereby, plays a major role in the regulation of multiple motility pathways. Functions as a membrane-associated protein kinase that phosphorylates PilR in response to environmental signals leading to activation of specific gene promoters including the pilin gene. The sequence is that of Sensor protein kinase PilS (pilS) from Pseudomonas aeruginosa (strain ATCC 15692 / DSM 22644 / CIP 104116 / JCM 14847 / LMG 12228 / 1C / PRS 101 / PAO1).